Here is a 638-residue protein sequence, read N- to C-terminus: Replication protein E1 (638 aa).

The short motif at 84-86 is the Nuclear localization signal element; it reads KRK. Serine 90 is subject to Phosphoserine; by host. A compositionally biased stretch (polar residues) spans 90–119; that stretch reads SQNSPLQDITNQHRQQSDSQQNTHQVNNSQ. Residues 90–133 are disordered; sequence SQNSPLQDITNQHRQQSDSQQNTHQVNNSQAKRRAVDSVPDSGY. A DNA-binding region region spans residues 176–342; sequence THVNSVTQIC…QTQLEHSFDD (167 aa). In terms of domain architecture, SF3 helicase spans 441 to 591; sequence VNFIYFLQVL…FPFDSNGNPV (151 aa). 467 to 474 is an ATP binding site; the sequence is GPPNTGKS.

Belongs to the papillomaviridae E1 protein family. As to quaternary structure, can form hexamers. Interacts with E2 protein; this interaction increases E1 DNA binding specificity. Interacts with host DNA polymerase subunit POLA2. Interacts with host single stranded DNA-binding protein RPA1. Interacts with host TOP1; this interaction stimulates the enzymatic activity of TOP1. Post-translationally, phosphorylated.

It localises to the host nucleus. The enzyme catalyses Couples ATP hydrolysis with the unwinding of duplex DNA by translocating in the 3'-5' direction.. It carries out the reaction ATP + H2O = ADP + phosphate + H(+). ATP-dependent DNA 3'-5' helicase required for initiation of viral DNA replication. It forms a complex with the viral E2 protein. The E1-E2 complex binds to the replication origin which contains binding sites for both proteins. During the initial step, a dimer of E1 interacts with a dimer of protein E2 leading to a complex that binds the viral origin of replication with high specificity. Then, a second dimer of E1 displaces the E2 dimer in an ATP-dependent manner to form the E1 tetramer. Following this, two E1 monomers are added to each half of the site, which results in the formation of two E1 trimers on the viral ori. Subsequently, two hexamers will be created. The double hexamer acts as a bi-directional helicase machinery and unwinds the viral DNA and then recruits the host DNA polymerase to start replication. The sequence is that of Replication protein E1 from Homo sapiens (Human).